Here is a 544-residue protein sequence, read N- to C-terminus: 4-coumarate--CoA ligase 2 (544 aa).

The ATP site is built by serine 190, serine 191, glycine 192, threonine 193, threonine 194, and lysine 198. Residue tyrosine 240 participates in (E)-4-coumaroyl-AMP binding. Lysine 261 contacts CoA. Positions 263–332 are SBD1; the sequence is DIVPFLELIQ…AKFPNAKLGQ (70 aa). (E)-4-coumaroyl-AMP-binding residues include alanine 310, glutamine 332, glycine 333, threonine 337, and methionine 345. Residues glutamine 332, glycine 333, and threonine 337 each coordinate ATP. The SBD2 stretch occupies residues 333–400; it reads GYGMTEAGPV…IRGDQIMKGY (68 aa). Residues aspartate 421 and arginine 436 each coordinate ATP. 2 residues coordinate (E)-4-coumaroyl-AMP: lysine 438 and lysine 442. Lysine 444 and glycine 445 together coordinate CoA. Position 527 (lysine 527) interacts with ATP.

The protein belongs to the ATP-dependent AMP-binding enzyme family. The cofactor is Mg(2+).

The enzyme catalyses (E)-4-coumarate + ATP + CoA = (E)-4-coumaroyl-CoA + AMP + diphosphate. The catalysed reaction is (E)-4-coumarate + ATP + H(+) = (E)-4-coumaroyl-AMP + diphosphate. It carries out the reaction (E)-4-coumaroyl-AMP + CoA = (E)-4-coumaroyl-CoA + AMP + H(+). It functions in the pathway phytoalexin biosynthesis; 3,4',5-trihydroxystilbene biosynthesis; 3,4',5-trihydroxystilbene from trans-4-coumarate: step 1/2. Carboxylate--CoA ligase that may use 4-coumarate as substrate. Follows a two-step reaction mechanism, wherein the carboxylate substrate first undergoes adenylation by ATP, followed by a thioesterification in the presence of CoA to yield the final CoA thioester. The protein is 4-coumarate--CoA ligase 2 (4CL2) of Petroselinum crispum (Parsley).